Here is a 593-residue protein sequence, read N- to C-terminus: Sodium-independent sulfate anion transporter (593 aa).

Residues 1-34 are Extracellular-facing; the sequence is MAPDTCCCSATALRRRLPVLAWVPDYSLQWLRLD. Residues 35–55 form a helical membrane-spanning segment; sequence FIAGLSVGLTVIPQALAYAEV. Position 56 (A56) is a topological domain, cytoplasmic. A helical transmembrane segment spans residues 57-77; sequence GLPPQYGLYSAFMGCFVYFFL. The Extracellular portion of the chain corresponds to 78–82; the sequence is GTSRD. The chain crosses the membrane as a helical span at residues 83 to 100; the sequence is VTLGPTAIMSLLVSFYTF. Over 101 to 106 the chain is Cytoplasmic; that stretch reads REPAYA. The chain crosses the membrane as a helical span at residues 107–127; sequence VLLAFLSGCIQLAMGLLHLGF. Topologically, residues 128–176 are extracellular; it reads LLDFISCPVIKGFTSAASITIGFGQIKNLLGLQKIPRQFFLQVYHTFLH. A helical membrane pass occupies residues 177–197; it reads IGETRVGDAVLGLASMLLLLV. Residues 198 to 233 lie on the Cytoplasmic side of the membrane; it reads LKCMREHMPPPHPEMPLAVKFSRGLVWTVTTARNAL. A helical transmembrane segment spans residues 234 to 254; it reads VVSSAALIAYAFEVTGSHPFV. Residues 255-287 are Extracellular-facing; sequence LTGKIAEGLPPVRIPPFSVTRDNKTISFSEMVQ. The chain crosses the membrane as a helical span at residues 288–308; the sequence is DMGAGLAVVPLMGLLESIAVA. Residues 309 to 324 are Cytoplasmic-facing; that stretch reads KSFASQNNYRIDANQE. The chain crosses the membrane as a helical span at residues 325–345; that stretch reads LLAIGLTNVLGSLVSSYPVTG. The Extracellular portion of the chain corresponds to 346–361; the sequence is SFGRTAVNAQTGVCTP. A helical membrane pass occupies residues 362–382; that stretch reads AGGLVTGALVLLSLNYLTSLF. A topological domain (cytoplasmic) is located at residue S383. A helical membrane pass occupies residues 384 to 404; sequence YIPKSALAAVIITAVTPLFDV. At 405–417 the chain is on the extracellular side; sequence KIFRSLWRVQRLD. Residues 418–438 form a helical membrane-spanning segment; it reads LLPLCVTFLLSFWEIQYGILA. Topologically, residues 439-593 are cytoplasmic; that stretch reads GSLVSLLILL…SSLLKSPSGP (155 aa). In terms of domain architecture, STAS spans 453-566; the sequence is RPKTQVSEGQ…EEAEKFLQQE (114 aa). The segment at 564–593 is disordered; the sequence is QQEPGTEPNSIHEDAVPEQRSSLLKSPSGP. A compositionally biased stretch (polar residues) spans 582-593; the sequence is QRSSLLKSPSGP.

This sequence belongs to the SLC26A/SulP transporter (TC 2.A.53) family. As to expression, abundantly expressed in the cerebellum, with a predominant expression in Purkinje cells (at protein level). Predominantly expressed in the kidney and brain. In the kidney localizes in collecting duct intercalated cells (at protein level). In terms of tissue distribution, predominantly expressed in the brain with lower levels in the kidney.

Its subcellular location is the cell membrane. The protein resides in the lysosome membrane. It is found in the apical cell membrane. The protein localises to the basolateral cell membrane. The catalysed reaction is hydrogencarbonate(in) + chloride(out) = hydrogencarbonate(out) + chloride(in). The enzyme catalyses sulfate(in) + H(+)(in) = sulfate(out) + H(+)(out). It carries out the reaction oxalate(in) + chloride(out) = oxalate(out) + chloride(in). Its function is as follows. Sodium-independent anion exchanger mediating bicarbonate, chloride, sulfate and oxalate transport. Exhibits sodium-independent sulfate anion transporter activity that may cooperate with SLC26A2 to mediate DIDS-sensitive sulfate uptake into high endothelial venules endothelial cells (HEVEC). In the kidney, mediates chloride-bicarbonate exchange, facilitating V-ATPase-mediated acid secretion. May function as a chloride channel, playing an important role in moderating chloride homeostasis and neuronal activity in the cerebellum. The chain is Sodium-independent sulfate anion transporter from Mus musculus (Mouse).